Here is a 303-residue protein sequence, read N- to C-terminus: Probable 5-dehydro-4-deoxyglucarate dehydratase (303 aa).

Belongs to the DapA family.

The catalysed reaction is 5-dehydro-4-deoxy-D-glucarate + H(+) = 2,5-dioxopentanoate + CO2 + H2O. The protein operates within carbohydrate acid metabolism; D-glucarate degradation; 2,5-dioxopentanoate from D-glucarate: step 2/2. The sequence is that of Probable 5-dehydro-4-deoxyglucarate dehydratase from Paracidovorax citrulli (strain AAC00-1) (Acidovorax citrulli).